A 236-amino-acid polypeptide reads, in one-letter code: Biosynthetic peptidoglycan transglycosylase (236 aa).

Residues 12 to 31 form a helical membrane-spanning segment; it reads ALLWFAAGSVLVVLVLRWVP.

The protein belongs to the glycosyltransferase 51 family.

The protein localises to the cell inner membrane. The enzyme catalyses [GlcNAc-(1-&gt;4)-Mur2Ac(oyl-L-Ala-gamma-D-Glu-L-Lys-D-Ala-D-Ala)](n)-di-trans,octa-cis-undecaprenyl diphosphate + beta-D-GlcNAc-(1-&gt;4)-Mur2Ac(oyl-L-Ala-gamma-D-Glu-L-Lys-D-Ala-D-Ala)-di-trans,octa-cis-undecaprenyl diphosphate = [GlcNAc-(1-&gt;4)-Mur2Ac(oyl-L-Ala-gamma-D-Glu-L-Lys-D-Ala-D-Ala)](n+1)-di-trans,octa-cis-undecaprenyl diphosphate + di-trans,octa-cis-undecaprenyl diphosphate + H(+). It functions in the pathway cell wall biogenesis; peptidoglycan biosynthesis. Peptidoglycan polymerase that catalyzes glycan chain elongation from lipid-linked precursors. The polypeptide is Biosynthetic peptidoglycan transglycosylase (Pseudomonas savastanoi pv. phaseolicola (strain 1448A / Race 6) (Pseudomonas syringae pv. phaseolicola (strain 1448A / Race 6))).